We begin with the raw amino-acid sequence, 126 residues long: MHELSYATSVLNAILDAVKQQEELGRKVIKVNDINLEIGDLTLLSVDQLQFVFEVISEDTVCKGAELKAEIVKPKIFCMDCEFEGNLDTKDELEVACPKCESRNVKLKGGKEFNIVNATIEFDDEE.

His2 is a binding site for Ni(2+). Zn(2+) is bound by residues Cys78, Cys81, Cys97, and Cys100.

It belongs to the HypA/HybF family.

Its function is as follows. Involved in the maturation of [NiFe] hydrogenases. Required for nickel insertion into the metal center of the hydrogenase. The polypeptide is Hydrogenase maturation factor HypA (Methanococcus maripaludis (strain C5 / ATCC BAA-1333)).